We begin with the raw amino-acid sequence, 471 residues long: ATP synthase subunit beta (471 aa).

156-163 (GGAGVGKT) serves as a coordination point for ATP.

The protein belongs to the ATPase alpha/beta chains family. In terms of assembly, F-type ATPases have 2 components, CF(1) - the catalytic core - and CF(0) - the membrane proton channel. CF(1) has five subunits: alpha(3), beta(3), gamma(1), delta(1), epsilon(1). CF(0) has three main subunits: a(1), b(2) and c(9-12). The alpha and beta chains form an alternating ring which encloses part of the gamma chain. CF(1) is attached to CF(0) by a central stalk formed by the gamma and epsilon chains, while a peripheral stalk is formed by the delta and b chains.

The protein localises to the cell membrane. It catalyses the reaction ATP + H2O + 4 H(+)(in) = ADP + phosphate + 5 H(+)(out). Functionally, produces ATP from ADP in the presence of a proton gradient across the membrane. The catalytic sites are hosted primarily by the beta subunits. The chain is ATP synthase subunit beta from Lawsonia intracellularis (strain PHE/MN1-00).